Here is a 237-residue protein sequence, read N- to C-terminus: Ribose-5-phosphate isomerase A (237 aa).

Residues S29 to T32, D86 to D89, and K99 to G102 each bind substrate. The active-site Proton acceptor is E108. K126 lines the substrate pocket.

This sequence belongs to the ribose 5-phosphate isomerase family. In terms of assembly, homodimer.

It carries out the reaction aldehydo-D-ribose 5-phosphate = D-ribulose 5-phosphate. The protein operates within carbohydrate degradation; pentose phosphate pathway; D-ribose 5-phosphate from D-ribulose 5-phosphate (non-oxidative stage): step 1/1. Its function is as follows. Catalyzes the reversible conversion of ribose-5-phosphate to ribulose 5-phosphate. The sequence is that of Ribose-5-phosphate isomerase A from Prochlorococcus marinus (strain MIT 9312).